A 354-amino-acid chain; its full sequence is Serum paraoxonase/arylesterase 2 (354 aa).

The N-linked (GlcNAc...) asparagine glycan is linked to Asn-29. Cys-42 and Cys-352 are oxidised to a cystine. Glu-53 and Asp-54 together coordinate Ca(2+). His-114 serves as the catalytic Proton acceptor. Positions 116, 167, 168, and 223 each coordinate Ca(2+). Asn-254 carries an N-linked (GlcNAc...) asparagine glycan. 2 residues coordinate Ca(2+): Asp-268 and Asn-269. 2 N-linked (GlcNAc...) asparagine glycosylation sites follow: Asn-269 and Asn-323.

This sequence belongs to the paraoxonase family. Requires Ca(2+) as cofactor. Glycosylated. Post-translationally, the signal sequence is not cleaved.

The protein resides in the membrane. The enzyme catalyses a phenyl acetate + H2O = a phenol + acetate + H(+). It carries out the reaction An aryl dialkyl phosphate + H2O = dialkyl phosphate + an aryl alcohol.. Functionally, the absence of paraoxonase activity in turkey and chicken blood and in turkey liver indicates that PON2, if expressed, does not hydrolyze paraoxon. In Gallus gallus (Chicken), this protein is Serum paraoxonase/arylesterase 2 (PON2).